The following is an 863-amino-acid chain: Leucine--tRNA ligase (863 aa).

The 'HIGH' region motif lies at 42–53; it reads PYPSGSGLHVGH. The short motif at 635 to 639 is the 'KMSKS' region element; it reads KMSKS. ATP is bound at residue K638.

Belongs to the class-I aminoacyl-tRNA synthetase family.

Its subcellular location is the cytoplasm. It catalyses the reaction tRNA(Leu) + L-leucine + ATP = L-leucyl-tRNA(Leu) + AMP + diphosphate. In Salinibacter ruber (strain DSM 13855 / M31), this protein is Leucine--tRNA ligase.